The sequence spans 344 residues: Probable dual-specificity RNA methyltransferase RlmN (344 aa).

Glu92 functions as the Proton acceptor in the catalytic mechanism. In terms of domain architecture, Radical SAM core spans 98–325 (DEDRATLCVS…TTIRASRGED (228 aa)). Cys105 and Cys330 are disulfide-bonded. Residues Cys112, Cys116, and Cys119 each contribute to the [4Fe-4S] cluster site. S-adenosyl-L-methionine is bound by residues 157-158 (GE), Ser189, 211-213 (SLH), and His287. The active-site S-methylcysteine intermediate is Cys330.

It belongs to the radical SAM superfamily. RlmN family. Requires [4Fe-4S] cluster as cofactor.

The protein localises to the cytoplasm. The enzyme catalyses adenosine(2503) in 23S rRNA + 2 reduced [2Fe-2S]-[ferredoxin] + 2 S-adenosyl-L-methionine = 2-methyladenosine(2503) in 23S rRNA + 5'-deoxyadenosine + L-methionine + 2 oxidized [2Fe-2S]-[ferredoxin] + S-adenosyl-L-homocysteine. It catalyses the reaction adenosine(37) in tRNA + 2 reduced [2Fe-2S]-[ferredoxin] + 2 S-adenosyl-L-methionine = 2-methyladenosine(37) in tRNA + 5'-deoxyadenosine + L-methionine + 2 oxidized [2Fe-2S]-[ferredoxin] + S-adenosyl-L-homocysteine. Its function is as follows. Specifically methylates position 2 of adenine 2503 in 23S rRNA and position 2 of adenine 37 in tRNAs. This chain is Probable dual-specificity RNA methyltransferase RlmN, found in Bacteroides fragilis (strain ATCC 25285 / DSM 2151 / CCUG 4856 / JCM 11019 / LMG 10263 / NCTC 9343 / Onslow / VPI 2553 / EN-2).